An 859-amino-acid chain; its full sequence is Leucine--tRNA ligase (859 aa).

Positions 42–52 (PYPSGRLHMGH) match the 'HIGH' region motif. The 'KMSKS' region signature appears at 618–622 (KMSKS). Lysine 621 provides a ligand contact to ATP.

The protein belongs to the class-I aminoacyl-tRNA synthetase family.

Its subcellular location is the cytoplasm. The catalysed reaction is tRNA(Leu) + L-leucine + ATP = L-leucyl-tRNA(Leu) + AMP + diphosphate. This is Leucine--tRNA ligase from Shewanella baltica (strain OS223).